The primary structure comprises 440 residues: Elongation factor 1-alpha (440 aa).

The 224-residue stretch at 5-228 (KPHINLVVIG…ALDTYIQPPK (224 aa)) folds into the tr-type G domain. The interval 14–21 (GHVDHGKS) is G1. A GTP-binding site is contributed by 14–21 (GHVDHGKS). Serine 21 provides a ligand contact to Mg(2+). Residues 70–74 (GVTID) form a G2 region. Residues 91–94 (DAPG) are G3. Residues 91-95 (DAPGH) and 153-156 (NKMD) contribute to the GTP site. The interval 153 to 156 (NKMD) is G4. Positions 194–196 (SAW) are G5.

The protein belongs to the TRAFAC class translation factor GTPase superfamily. Classic translation factor GTPase family. EF-Tu/EF-1A subfamily.

The protein localises to the cytoplasm. It carries out the reaction GTP + H2O = GDP + phosphate + H(+). Its function is as follows. GTP hydrolase that promotes the GTP-dependent binding of aminoacyl-tRNA to the A-site of ribosomes during protein biosynthesis. In Hyperthermus butylicus (strain DSM 5456 / JCM 9403 / PLM1-5), this protein is Elongation factor 1-alpha.